The primary structure comprises 309 residues: tRNA pseudouridine synthase B (309 aa).

Residue D52 is the Nucleophile of the active site.

This sequence belongs to the pseudouridine synthase TruB family. Type 1 subfamily.

The enzyme catalyses uridine(55) in tRNA = pseudouridine(55) in tRNA. Responsible for synthesis of pseudouridine from uracil-55 in the psi GC loop of transfer RNAs. This is tRNA pseudouridine synthase B from Leptospira interrogans serogroup Icterohaemorrhagiae serovar copenhageni (strain Fiocruz L1-130).